Consider the following 135-residue polypeptide: C-type natriuretic peptide (135 aa).

An N-terminal signal peptide occupies residues 1–25 (MSGHTSFYCGLLLLLLIQVQARPRA). A propeptide spanning residues 26 to 113 (DDSLQVLSRL…PLRFKGRSKK (88 aa)) is cleaved from the precursor. Positions 46 to 67 (EELNNEAQEISPAASLPDLNTD) are disordered. A disulfide bond links Cys-119 and Cys-135.

The protein belongs to the natriuretic peptide family.

It is found in the secreted. Its function is as follows. Hormone which may be vasoactive and natriuretic. Has a cGMP-stimulating activity. This Squalus acanthias (Spiny dogfish) protein is C-type natriuretic peptide.